We begin with the raw amino-acid sequence, 522 residues long: Glucans biosynthesis protein G (522 aa).

The N-terminal stretch at 1-33 (MLVNILSKKPRAASVRWLGATVLFTLLTSPAWA) is a signal peptide.

The protein belongs to the OpgD/OpgG family.

The protein localises to the periplasm. It participates in glycan metabolism; osmoregulated periplasmic glucan (OPG) biosynthesis. Involved in the biosynthesis of osmoregulated periplasmic glucans (OPGs). This is Glucans biosynthesis protein G from Serratia proteamaculans (strain 568).